We begin with the raw amino-acid sequence, 326 residues long: Methionine import ATP-binding protein MetN (326 aa).

Residues 1–226 (MVFYTIGPQT…PQQPITRQFV (226 aa)) form the ABC transporter domain. Residue 23-30 (GYSGAGKS) coordinates ATP.

It belongs to the ABC transporter superfamily. Methionine importer (TC 3.A.1.24) family. The complex is composed of two ATP-binding proteins (MetN), two transmembrane proteins (MetI) and a solute-binding protein (MetQ).

It localises to the cell inner membrane. It catalyses the reaction L-methionine(out) + ATP + H2O = L-methionine(in) + ADP + phosphate + H(+). The catalysed reaction is D-methionine(out) + ATP + H2O = D-methionine(in) + ADP + phosphate + H(+). Part of the ABC transporter complex MetNIQ involved in methionine import. Responsible for energy coupling to the transport system. The sequence is that of Methionine import ATP-binding protein MetN from Erwinia pyrifoliae (strain DSM 12162 / Ep1/96).